The sequence spans 334 residues: 4-hydroxy-3-methylbut-2-enyl diphosphate reductase (334 aa).

[4Fe-4S] cluster is bound at residue Cys-19. (2E)-4-hydroxy-3-methylbut-2-enyl diphosphate-binding residues include His-48 and His-84. Dimethylallyl diphosphate contacts are provided by His-48 and His-84. The isopentenyl diphosphate site is built by His-48 and His-84. A [4Fe-4S] cluster-binding site is contributed by Cys-106. His-134 is a (2E)-4-hydroxy-3-methylbut-2-enyl diphosphate binding site. Position 134 (His-134) interacts with dimethylallyl diphosphate. His-134 is an isopentenyl diphosphate binding site. Glu-136 acts as the Proton donor in catalysis. Thr-175 contacts (2E)-4-hydroxy-3-methylbut-2-enyl diphosphate. Cys-205 provides a ligand contact to [4Fe-4S] cluster. Ser-233, Ser-234, Asn-235, and Ser-278 together coordinate (2E)-4-hydroxy-3-methylbut-2-enyl diphosphate. Residues Ser-233, Ser-234, Asn-235, and Ser-278 each contribute to the dimethylallyl diphosphate site. Positions 233, 234, 235, and 278 each coordinate isopentenyl diphosphate.

This sequence belongs to the IspH family. [4Fe-4S] cluster serves as cofactor.

It carries out the reaction isopentenyl diphosphate + 2 oxidized [2Fe-2S]-[ferredoxin] + H2O = (2E)-4-hydroxy-3-methylbut-2-enyl diphosphate + 2 reduced [2Fe-2S]-[ferredoxin] + 2 H(+). It catalyses the reaction dimethylallyl diphosphate + 2 oxidized [2Fe-2S]-[ferredoxin] + H2O = (2E)-4-hydroxy-3-methylbut-2-enyl diphosphate + 2 reduced [2Fe-2S]-[ferredoxin] + 2 H(+). It functions in the pathway isoprenoid biosynthesis; dimethylallyl diphosphate biosynthesis; dimethylallyl diphosphate from (2E)-4-hydroxy-3-methylbutenyl diphosphate: step 1/1. Its pathway is isoprenoid biosynthesis; isopentenyl diphosphate biosynthesis via DXP pathway; isopentenyl diphosphate from 1-deoxy-D-xylulose 5-phosphate: step 6/6. Its function is as follows. Catalyzes the conversion of 1-hydroxy-2-methyl-2-(E)-butenyl 4-diphosphate (HMBPP) into a mixture of isopentenyl diphosphate (IPP) and dimethylallyl diphosphate (DMAPP). Acts in the terminal step of the DOXP/MEP pathway for isoprenoid precursor biosynthesis. The sequence is that of 4-hydroxy-3-methylbut-2-enyl diphosphate reductase from Chelativorans sp. (strain BNC1).